A 237-amino-acid chain; its full sequence is 5'-methylthioadenosine/S-adenosylhomocysteine nucleosidase (237 aa).

Glu12 acts as the Proton acceptor in catalysis. Substrate contacts are provided by residues Ala78, Ile152, and 173–174 (ME). The active-site Proton donor is the Asp197.

It belongs to the PNP/UDP phosphorylase family. MtnN subfamily. As to quaternary structure, homodimer.

It carries out the reaction S-adenosyl-L-homocysteine + H2O = S-(5-deoxy-D-ribos-5-yl)-L-homocysteine + adenine. The catalysed reaction is S-methyl-5'-thioadenosine + H2O = 5-(methylsulfanyl)-D-ribose + adenine. It catalyses the reaction 5'-deoxyadenosine + H2O = 5-deoxy-D-ribose + adenine. Its pathway is amino-acid biosynthesis; L-methionine biosynthesis via salvage pathway; S-methyl-5-thio-alpha-D-ribose 1-phosphate from S-methyl-5'-thioadenosine (hydrolase route): step 1/2. Its function is as follows. Catalyzes the irreversible cleavage of the glycosidic bond in both 5'-methylthioadenosine (MTA) and S-adenosylhomocysteine (SAH/AdoHcy) to adenine and the corresponding thioribose, 5'-methylthioribose and S-ribosylhomocysteine, respectively. Also cleaves 5'-deoxyadenosine, a toxic by-product of radical S-adenosylmethionine (SAM) enzymes, into 5-deoxyribose and adenine. Thus, is required for in vivo function of the radical SAM enzymes biotin synthase and lipoic acid synthase, that are inhibited by 5'-deoxyadenosine accumulation. This Hamiltonella defensa subsp. Acyrthosiphon pisum (strain 5AT) protein is 5'-methylthioadenosine/S-adenosylhomocysteine nucleosidase.